The chain runs to 85 residues: MAHKKAGGSTRNGRDSEAKRLGVKRFGGEAVLAGSIIVRQRGTKFHAGTNVGCGRDHTLFALADGKVKFEVKGPNNRKFISIEAE.

Positions 1–20 (MAHKKAGGSTRNGRDSEAKR) are disordered.

The protein belongs to the bacterial ribosomal protein bL27 family.

This is Large ribosomal subunit protein bL27 from Proteus mirabilis (strain HI4320).